A 91-amino-acid chain; its full sequence is Large ribosomal subunit protein uL23c (91 aa).

It belongs to the universal ribosomal protein uL23 family. Part of the 50S ribosomal subunit.

It localises to the plastid. It is found in the chloroplast. Its function is as follows. Binds to 23S rRNA. The sequence is that of Large ribosomal subunit protein uL23c (rpl23) from Chaetosphaeridium globosum (Charophycean green alga).